The sequence spans 186 residues: Lipid A acyltransferase PagP (186 aa).

An N-terminal signal peptide occupies residues 1–19; sequence MKRLISCLTIICALNRSAA. Residues His-60, Asp-103, and Ser-104 contribute to the active site.

The protein belongs to the lipid A palmitoyltransferase family. As to quaternary structure, homodimer.

The protein localises to the cell outer membrane. The catalysed reaction is a lipid A + a 1,2-diacyl-sn-glycero-3-phosphocholine = a hepta-acyl lipid A + a 2-acyl-sn-glycero-3-phosphocholine. It catalyses the reaction a lipid IVA + a 1,2-diacyl-sn-glycero-3-phosphocholine = a lipid IVB + a 2-acyl-sn-glycero-3-phosphocholine. It carries out the reaction a lipid IIA + a 1,2-diacyl-sn-glycero-3-phosphocholine = a lipid IIB + a 2-acyl-sn-glycero-3-phosphocholine. Its function is as follows. Transfers a fatty acid residue from the sn-1 position of a phospholipid to the N-linked hydroxyfatty acid chain on the proximal unit of lipid A or its precursors. Confers resistance to cationic antimicrobial peptides (CAMPs). Promotes the ability of L.pneumophila to replicate and/or survive in macrophages. Important for ability to kill macrophages and to promote the virulence. This is Lipid A acyltransferase PagP from Legionella pneumophila.